A 152-amino-acid chain; its full sequence is MVTVLRLSSLCRANRASAFKSLLIRPVPCLSQDLHTVQTSQIHTSQNHHAASKAASLHWTSERALSVALLGLLPAAYLYPGAAVDYSLAAALTLHGHWGLGQVVTDYVHGDAKIKLANTSLFALSALTFAGLCYFNYHDVGICKAVAMLWSL.

Residues 1–21 (MVTVLRLSSLCRANRASAFKS) constitute a mitochondrion transit peptide. At 22-56 (LLIRPVPCLSQDLHTVQTSQIHTSQNHHAASKAAS) the chain is on the mitochondrial matrix side. Residues 57-78 (LHWTSERALSVALLGLLPAAYL) form a helical membrane-spanning segment. The Mitochondrial intermembrane portion of the chain corresponds to 79 to 83 (YPGAA). The chain crosses the membrane as a helical span at residues 84 to 104 (VDYSLAAALTLHGHWGLGQVV). Residue His95 coordinates heme b. Topologically, residues 105–113 (TDYVHGDAK) are mitochondrial matrix. An a ubiquinone-binding site is contributed by Tyr107. Residues 114-135 (IKLANTSLFALSALTFAGLCYF) form a helical membrane-spanning segment. Residues 136–152 (NYHDVGICKAVAMLWSL) lie on the Mitochondrial intermembrane side of the membrane.

Belongs to the CybS family. In terms of assembly, component of complex II composed of four subunits: the flavoprotein (FP) SDHA, iron-sulfur protein (IP) SDHB, and a cytochrome b560 composed of SDHC and SDHD.

The protein resides in the mitochondrion inner membrane. It participates in carbohydrate metabolism; tricarboxylic acid cycle. Membrane-anchoring subunit of succinate dehydrogenase (SDH) that is involved in complex II of the mitochondrial electron transport chain and is responsible for transferring electrons from succinate to ubiquinone (coenzyme Q). SDH also oxidizes malate to the non-canonical enol form of oxaloacetate, enol-oxaloacetate. Enol-oxaloacetate, which is a potent inhibitor of the succinate dehydrogenase activity, is further isomerized into keto-oxaloacetate. The chain is Succinate dehydrogenase [ubiquinone] cytochrome b small subunit A, mitochondrial (sdhd-a) from Xenopus laevis (African clawed frog).